An 81-amino-acid chain; its full sequence is EC protein III (81 aa).

The protein belongs to the metallothionein superfamily. Type 15 family.

Its function is as follows. Binds 5 molecules of zinc. May have a role in Zn(2+) homeostasis during embryogenesis. The sequence is that of EC protein III from Triticum aestivum (Wheat).